A 309-amino-acid chain; its full sequence is Methionyl-tRNA formyltransferase (309 aa).

(6S)-5,6,7,8-tetrahydrofolate is bound at residue 109–112 (SLLP).

Belongs to the Fmt family.

It catalyses the reaction L-methionyl-tRNA(fMet) + (6R)-10-formyltetrahydrofolate = N-formyl-L-methionyl-tRNA(fMet) + (6S)-5,6,7,8-tetrahydrofolate + H(+). Functionally, attaches a formyl group to the free amino group of methionyl-tRNA(fMet). The formyl group appears to play a dual role in the initiator identity of N-formylmethionyl-tRNA by promoting its recognition by IF2 and preventing the misappropriation of this tRNA by the elongation apparatus. This Thiobacillus denitrificans (strain ATCC 25259 / T1) protein is Methionyl-tRNA formyltransferase.